We begin with the raw amino-acid sequence, 222 residues long: Eukaryotic translation initiation factor 3 subunit K (222 aa).

In terms of domain architecture, PCI spans 46 to 208 (YDLEANLAVL…KIKTKNITEK (163 aa)).

Belongs to the eIF-3 subunit K family. Component of the eukaryotic translation initiation factor 3 (eIF-3) complex. The eIF-3 complex interacts with pix.

The protein resides in the cytoplasm. Component of the eukaryotic translation initiation factor 3 (eIF-3) complex, which is involved in protein synthesis of a specialized repertoire of mRNAs and, together with other initiation factors, stimulates binding of mRNA and methionyl-tRNAi to the 40S ribosome. The eIF-3 complex specifically targets and initiates translation of a subset of mRNAs involved in cell proliferation. The polypeptide is Eukaryotic translation initiation factor 3 subunit K (Drosophila willistoni (Fruit fly)).